A 540-amino-acid chain; its full sequence is GMP synthase [glutamine-hydrolyzing] (540 aa).

Residues 26–216 (IIIILDFGSQ…VYHICECEPT (191 aa)) enclose the Glutamine amidotransferase type-1 domain. Cys-103 serves as the catalytic Nucleophile. Catalysis depends on residues His-190 and Glu-192. Residues 217–415 (WTTAAFVEEA…VGLPEEIVQR (199 aa)) enclose the GMPS ATP-PPase domain. Position 244–250 (244–250 (SGGVDSS)) interacts with ATP.

As to quaternary structure, homodimer.

The catalysed reaction is XMP + L-glutamine + ATP + H2O = GMP + L-glutamate + AMP + diphosphate + 2 H(+). It participates in purine metabolism; GMP biosynthesis; GMP from XMP (L-Gln route): step 1/1. Functionally, catalyzes the synthesis of GMP from XMP. The sequence is that of GMP synthase [glutamine-hydrolyzing] from Nostoc sp. (strain PCC 7120 / SAG 25.82 / UTEX 2576).